Reading from the N-terminus, the 471-residue chain is GDP-mannose transporter (471 aa).

The span at 1–13 shows a compositional bias: polar residues; it reads MSSGSRSFFTPQE. The interval 1–52 is disordered; it reads MSSGSRSFFTPQETRLELPQGAAHQTPDITRPASPSENDRAPFLNGGPSDAR. At 1-70 the chain is on the cytoplasmic side; sequence MSSGSRSFFT…ALRNDSEKPA (70 aa). Residues 71 to 91 traverse the membrane as a helical segment; it reads VGIMALAPILCYCAASITMTV. At 92 to 101 the chain is on the lumenal side; it reads VNKFTVSGRG. Residues 102–122 traverse the membrane as a helical segment; sequence FNMNLLVLLIQSTVGVTCVWI. The Cytoplasmic segment spans residues 123 to 139; the sequence is AERAGLIQLRGLNAKDA. A helical membrane pass occupies residues 140 to 160; sequence WNWMPLSIMLVFVIWTGSKAL. Residues 161 to 166 are Lumenal-facing; sequence QYLNIS. Asn-164 is a glycosylation site (N-linked (GlcNAc...) asparagine). A helical membrane pass occupies residues 167-187; it reads VYTIFKNLTIILIAYGEVMWF. Residues 188–193 lie on the Cytoplasmic side of the membrane; that stretch reads GGRVTR. Residues 194-214 form a helical membrane-spanning segment; it reads IVLCSFLFMVLSSVIAAWSDI. Over 215–279 the chain is Lumenal; that stretch reads SNVFAIGNLS…DVIEGFQGYG (65 aa). Asn-222 is a glycosylation site (N-linked (GlcNAc...) asparagine). A helical transmembrane segment spans residues 280–300; that stretch reads LLSSGYVWMALNCICSATYVL. The Cytoplasmic portion of the chain corresponds to 301-315; sequence LMRKRIKVTGFKDWD. A helical membrane pass occupies residues 316–336; sequence TMFYNNFLSIPVLLLMSFLVE. Residues 337 to 354 lie on the Lumenal side of the membrane; the sequence is DWSYANLHKNFPDDKQTK. The helical transmembrane segment at 355–375 threads the bilayer; sequence LISAIVFSGACAILISYTTAW. The Cytoplasmic portion of the chain corresponds to 376 to 383; that stretch reads CIRATSST. The chain crosses the membrane as a helical span at residues 384–404; the sequence is TYSMVGALNKLPVALSGMVFF. Over 405-408 the chain is Lumenal; it reads HDPP. A helical membrane pass occupies residues 409-429; the sequence is VTFSSVSAIAVGFFAGLVYAF. Residues 430–471 lie on the Cytoplasmic side of the membrane; sequence GKNKQAEAAKLGGHASANGSSSMSGSKDGSSLPMHTFNDRKD. Over residues 442-460 the composition is skewed to low complexity; that stretch reads GHASANGSSSMSGSKDGSS. The interval 442-471 is disordered; that stretch reads GHASANGSSSMSGSKDGSSLPMHTFNDRKD.

This sequence belongs to the TPT transporter family. SLC35D subfamily. As to quaternary structure, homooligomer.

It localises to the golgi apparatus membrane. The protein resides in the cytoplasmic vesicle membrane. Its subcellular location is the endoplasmic reticulum membrane. Involved in the import of GDP-mannose from the cytoplasm into the Golgi lumen. The sequence is that of GDP-mannose transporter (VRG4) from Mycosarcoma maydis (Corn smut fungus).